Reading from the N-terminus, the 472-residue chain is Uronate isomerase (472 aa).

The protein belongs to the metallo-dependent hydrolases superfamily. Uronate isomerase family.

The catalysed reaction is D-glucuronate = D-fructuronate. The enzyme catalyses aldehydo-D-galacturonate = keto-D-tagaturonate. It functions in the pathway carbohydrate metabolism; pentose and glucuronate interconversion. The chain is Uronate isomerase from Oceanobacillus iheyensis (strain DSM 14371 / CIP 107618 / JCM 11309 / KCTC 3954 / HTE831).